The primary structure comprises 67 residues: ATP synthase F(0) complex subunit 8 (67 aa).

The helical transmembrane segment at Thr-8–Phe-24 threads the bilayer. Lys-54 carries the post-translational modification N6-acetyllysine; alternate. An N6-succinyllysine; alternate modification is found at Lys-54. Lys-57 bears the N6-acetyllysine mark.

This sequence belongs to the ATPase protein 8 family. As to quaternary structure, component of the ATP synthase complex composed at least of ATP5F1A/subunit alpha, ATP5F1B/subunit beta, ATP5MC1/subunit c (homooctomer), MT-ATP6/subunit a, MT-ATP8/subunit 8, ATP5ME/subunit e, ATP5MF/subunit f, ATP5MG/subunit g, ATP5MK/subunit k, ATP5MJ/subunit j, ATP5F1C/subunit gamma, ATP5F1D/subunit delta, ATP5F1E/subunit epsilon, ATP5PF/subunit F6, ATP5PB/subunit b, ATP5PD/subunit d, ATP5PO/subunit OSCP. ATP synthase complex consists of a soluble F(1) head domain (subunits alpha(3) and beta(3)) - the catalytic core - and a membrane F(0) domain - the membrane proton channel (subunits c, a, 8, e, f, g, k and j). These two domains are linked by a central stalk (subunits gamma, delta, and epsilon) rotating inside the F1 region and a stationary peripheral stalk (subunits F6, b, d, and OSCP). Interacts with PRICKLE3.

The protein localises to the mitochondrion membrane. Subunit 8, of the mitochondrial membrane ATP synthase complex (F(1)F(0) ATP synthase or Complex V) that produces ATP from ADP in the presence of a proton gradient across the membrane which is generated by electron transport complexes of the respiratory chain. ATP synthase complex consist of a soluble F(1) head domain - the catalytic core - and a membrane F(1) domain - the membrane proton channel. These two domains are linked by a central stalk rotating inside the F(1) region and a stationary peripheral stalk. During catalysis, ATP synthesis in the catalytic domain of F(1) is coupled via a rotary mechanism of the central stalk subunits to proton translocation. In vivo, can only synthesize ATP although its ATP hydrolase activity can be activated artificially in vitro. Part of the complex F(0) domain. The polypeptide is ATP synthase F(0) complex subunit 8 (Rattus norvegicus (Rat)).